Consider the following 427-residue polypeptide: Glutamate-1-semialdehyde 2,1-aminomutase (427 aa).

Lysine 265 carries the post-translational modification N6-(pyridoxal phosphate)lysine.

Belongs to the class-III pyridoxal-phosphate-dependent aminotransferase family. HemL subfamily. As to quaternary structure, homodimer. The cofactor is pyridoxal 5'-phosphate.

The protein resides in the cytoplasm. The enzyme catalyses (S)-4-amino-5-oxopentanoate = 5-aminolevulinate. Its pathway is porphyrin-containing compound metabolism; protoporphyrin-IX biosynthesis; 5-aminolevulinate from L-glutamyl-tRNA(Glu): step 2/2. The polypeptide is Glutamate-1-semialdehyde 2,1-aminomutase (Pseudomonas fluorescens (strain SBW25)).